Here is a 174-residue protein sequence, read N- to C-terminus: ATP synthase subunit b, organellar chromatophore (174 aa).

A helical membrane pass occupies residues 26–46 (LINLIIVIGVLFTFLRGFLGE).

The protein belongs to the ATPase B chain family. In terms of assembly, F-type ATPases have 2 components, F(1) - the catalytic core - and F(0) - the membrane proton channel. F(1) has five subunits: alpha(3), beta(3), gamma(1), delta(1), epsilon(1). F(0) has four main subunits: a(1), b(1), b'(1) and c(10-14). The alpha and beta chains form an alternating ring which encloses part of the gamma chain. F(1) is attached to F(0) by a central stalk formed by the gamma and epsilon chains, while a peripheral stalk is formed by the delta, b and b' chains.

The protein resides in the plastid. The protein localises to the organellar chromatophore thylakoid membrane. In terms of biological role, f(1)F(0) ATP synthase produces ATP from ADP in the presence of a proton or sodium gradient. F-type ATPases consist of two structural domains, F(1) containing the extramembraneous catalytic core and F(0) containing the membrane proton channel, linked together by a central stalk and a peripheral stalk. During catalysis, ATP synthesis in the catalytic domain of F(1) is coupled via a rotary mechanism of the central stalk subunits to proton translocation. Functionally, component of the F(0) channel, it forms part of the peripheral stalk, linking F(1) to F(0). The polypeptide is ATP synthase subunit b, organellar chromatophore (Paulinella chromatophora).